Here is a 1300-residue protein sequence, read N- to C-terminus: Insulin receptor-related protein (1300 aa).

Positions 1–26 (MAVPALWPWGVHLLMSLLSLGSGLDT) are cleaved as a signal peptide. N-linked (GlcNAc...) asparagine glycosylation is found at asparagine 47 and asparagine 100. Disulfide bonds link cysteine 214–cysteine 222, cysteine 216–cysteine 228, cysteine 229–cysteine 237, cysteine 233–cysteine 246, cysteine 249–cysteine 258, cysteine 262–cysteine 274, cysteine 280–cysteine 300, cysteine 304–cysteine 317, and cysteine 320–cysteine 324. Asparagine 311 carries an N-linked (GlcNAc...) asparagine glycan. N-linked (GlcNAc...) asparagine glycans are attached at residues asparagine 411, asparagine 492, asparagine 528, asparagine 616, asparagine 634, asparagine 756, asparagine 885, and asparagine 898. Fibronectin type-III domains follow at residues 483–603 (QTRT…TLPA) and 607–707 (VPQD…AQEV). Cysteine 657 and cysteine 864 are disulfide-bonded. Residues 747-921 (EAGLLRLGKN…LEEEDTGGMR (175 aa)) lie on the Extracellular side of the membrane. The region spanning 818–913 (IPGKVAWKAA…GVTFYITDLE (96 aa)) is the Fibronectin type-III 3 domain. Residues 922–943 (IFLTVTPVGFMLLVTLAALGFF) form a helical membrane-spanning segment. Residues 944 to 1300 (YSRKRNSTLY…YSAPNGGPGH (357 aa)) lie on the Cytoplasmic side of the membrane. A Protein kinase domain is found at 979-1254 (IAIIRELGQG…RIQDELRPSF (276 aa)). Residues 985-993 (LGQGSFGMV) and lysine 1013 contribute to the ATP site. Aspartate 1115 (proton acceptor) is an active-site residue. 2 positions are modified to phosphotyrosine; by autocatalysis: tyrosine 1145 and tyrosine 1146. The interval 1273-1300 (LPTEAEPDSPPTLNGASDYSAPNGGPGH) is disordered.

Belongs to the protein kinase superfamily. Tyr protein kinase family. Insulin receptor subfamily. As to quaternary structure, probable tetramer of 2 alpha and 2 beta chains linked by disulfide bonds. The alpha chains contribute to the formation of the ligand-binding domain, while the beta chains carry the kinase domain. In terms of processing, autophosphorylated on tyrosine residues between pH 7.9 and pH 10.5. Highly expressed in the islets as well as in pancreatic beta-cells.

The protein resides in the membrane. The catalysed reaction is L-tyrosyl-[protein] + ATP = O-phospho-L-tyrosyl-[protein] + ADP + H(+). Receptor with tyrosine-protein kinase activity. Functions as a pH sensing receptor which is activated by increased extracellular pH. Activates an intracellular signaling pathway that involves IRS1 and AKT1/PKB. The polypeptide is Insulin receptor-related protein (Insrr) (Mus musculus (Mouse)).